The chain runs to 160 residues: Lipoprotein signal peptidase (160 aa).

3 helical membrane passes run 7-27 (VIYYLLAAAVIALDQWTKWLV), 61-81 (GQFWLFYLVTVIVVAGIIIYI), and 91-111 (AGIGLGLMLGGAIGNFIDRVF). Residues aspartate 117 and aspartate 135 contribute to the active site. Residues 133 to 153 (IADSALTVGVILLFIHMFFFA) traverse the membrane as a helical segment.

Belongs to the peptidase A8 family.

It is found in the cell membrane. The catalysed reaction is Release of signal peptides from bacterial membrane prolipoproteins. Hydrolyzes -Xaa-Yaa-Zaa-|-(S,diacylglyceryl)Cys-, in which Xaa is hydrophobic (preferably Leu), and Yaa (Ala or Ser) and Zaa (Gly or Ala) have small, neutral side chains.. Its pathway is protein modification; lipoprotein biosynthesis (signal peptide cleavage). In terms of biological role, this protein specifically catalyzes the removal of signal peptides from prolipoproteins. The sequence is that of Lipoprotein signal peptidase from Geobacillus thermodenitrificans (strain NG80-2).